The chain runs to 359 residues: Small ribosomal subunit protein uS2 (359 aa).

The disordered stretch occupies residues Glu-232–Thr-295. Basic and acidic residues-rich tracts occupy residues Glu-239–Asn-250 and Asp-257–Tyr-273.

This sequence belongs to the universal ribosomal protein uS2 family.

In Spiroplasma citri, this protein is Small ribosomal subunit protein uS2 (rpsB).